A 370-amino-acid chain; its full sequence is Cyanuric acid amidohydrolase (370 aa).

The segment at M1–N103 is RU A. Residues R51 and S82–G83 each bind substrate. The segment at R113 to R250 is RU B. Residue K163 is part of the active site. Substrate contacts are provided by residues R195 and S233–A234. Catalysis depends on S233, which acts as the Nucleophile. Residues L256 to A370 form an RU C region. Residue E303 coordinates Mg(2+). Residues R330 and S349–G350 each bind substrate. S352, Q355, G356, P357, and G360 together coordinate Mg(2+).

Belongs to the cyclic amide hydrolase (CyAH) family. In terms of assembly, homotetramer.

The enzyme catalyses cyanurate + H2O = 1-carboxybiuret + H(+). It participates in xenobiotic degradation; atrazine degradation; biuret from cyanurate: step 1/1. Its activity is regulated as follows. Inhibited by barbituric acid. Responsible for the hydrolysis of cyanuric acid, an intermediate formed during catabolism of s-triazine based compounds in herbicides such as atrazine and polymers such as melamine. Catalyzes the hydrolytic opening of the s-triazine ring of cyanuric acid (2,4,6-trihydroxy-s-triazine) to yield carbon dioxide and carboxybiuret, which spontaneously decarboxylates to biuret. The polypeptide is Cyanuric acid amidohydrolase (trzD) (Pseudomonas sp).